A 155-amino-acid chain; its full sequence is 6,7-dimethyl-8-ribityllumazine synthase (155 aa).

5-amino-6-(D-ribitylamino)uracil contacts are provided by residues F23, 57-59, and 81-83; these read AFE and AVI. 86–87 serves as a coordination point for (2S)-2-hydroxy-3-oxobutyl phosphate; it reads ST. The active-site Proton donor is the H89. F114 contributes to the 5-amino-6-(D-ribitylamino)uracil binding site. R128 lines the (2S)-2-hydroxy-3-oxobutyl phosphate pocket.

It belongs to the DMRL synthase family.

It carries out the reaction (2S)-2-hydroxy-3-oxobutyl phosphate + 5-amino-6-(D-ribitylamino)uracil = 6,7-dimethyl-8-(1-D-ribityl)lumazine + phosphate + 2 H2O + H(+). Its pathway is cofactor biosynthesis; riboflavin biosynthesis; riboflavin from 2-hydroxy-3-oxobutyl phosphate and 5-amino-6-(D-ribitylamino)uracil: step 1/2. Functionally, catalyzes the formation of 6,7-dimethyl-8-ribityllumazine by condensation of 5-amino-6-(D-ribitylamino)uracil with 3,4-dihydroxy-2-butanone 4-phosphate. This is the penultimate step in the biosynthesis of riboflavin. In Geobacter sulfurreducens (strain ATCC 51573 / DSM 12127 / PCA), this protein is 6,7-dimethyl-8-ribityllumazine synthase.